The following is a 402-amino-acid chain: Non-structural protein 3 (402 aa).

2 coiled-coil regions span residues 87–113 and 147–181; these read LATIRRLDLELAELKLMLSNLGMKREE and KLKIKVEKNENYTESLKNKIEELECIIGAFEKGKE. One can recognise a DRBM domain in the interval 334-402; it reads PNALVKLNDC…AVSILDQLGM (69 aa).

This sequence belongs to the rotavirus NSP3 family.

It localises to the host cytoplasm. Its function is as follows. May play a role in stimulating the translation of viral mRNAs. The chain is Non-structural protein 3 from Bos taurus (Bovine).